A 382-amino-acid polypeptide reads, in one-letter code: Lipid-A-disaccharide synthase (382 aa).

The protein belongs to the LpxB family.

It catalyses the reaction a lipid X + a UDP-2-N,3-O-bis[(3R)-3-hydroxyacyl]-alpha-D-glucosamine = a lipid A disaccharide + UDP + H(+). The protein operates within bacterial outer membrane biogenesis; LPS lipid A biosynthesis. In terms of biological role, condensation of UDP-2,3-diacylglucosamine and 2,3-diacylglucosamine-1-phosphate to form lipid A disaccharide, a precursor of lipid A, a phosphorylated glycolipid that anchors the lipopolysaccharide to the outer membrane of the cell. This chain is Lipid-A-disaccharide synthase, found in Alteromonas mediterranea (strain DSM 17117 / CIP 110805 / LMG 28347 / Deep ecotype).